A 316-amino-acid chain; its full sequence is 4-hydroxy-3-methylbut-2-enyl diphosphate reductase (316 aa).

Cys-12 contacts [4Fe-4S] cluster. Residues His-41 and His-74 each contribute to the (2E)-4-hydroxy-3-methylbut-2-enyl diphosphate site. Dimethylallyl diphosphate contacts are provided by His-41 and His-74. Isopentenyl diphosphate-binding residues include His-41 and His-74. Cys-96 is a binding site for [4Fe-4S] cluster. Residue His-124 participates in (2E)-4-hydroxy-3-methylbut-2-enyl diphosphate binding. His-124 provides a ligand contact to dimethylallyl diphosphate. His-124 contributes to the isopentenyl diphosphate binding site. Glu-126 acts as the Proton donor in catalysis. Residue Thr-169 coordinates (2E)-4-hydroxy-3-methylbut-2-enyl diphosphate. Cys-199 is a [4Fe-4S] cluster binding site. Positions 227, 228, 229, and 271 each coordinate (2E)-4-hydroxy-3-methylbut-2-enyl diphosphate. Dimethylallyl diphosphate-binding residues include Ser-227, Ser-228, Asn-229, and Ser-271. 4 residues coordinate isopentenyl diphosphate: Ser-227, Ser-228, Asn-229, and Ser-271.

The protein belongs to the IspH family. The cofactor is [4Fe-4S] cluster.

It carries out the reaction isopentenyl diphosphate + 2 oxidized [2Fe-2S]-[ferredoxin] + H2O = (2E)-4-hydroxy-3-methylbut-2-enyl diphosphate + 2 reduced [2Fe-2S]-[ferredoxin] + 2 H(+). The catalysed reaction is dimethylallyl diphosphate + 2 oxidized [2Fe-2S]-[ferredoxin] + H2O = (2E)-4-hydroxy-3-methylbut-2-enyl diphosphate + 2 reduced [2Fe-2S]-[ferredoxin] + 2 H(+). It participates in isoprenoid biosynthesis; dimethylallyl diphosphate biosynthesis; dimethylallyl diphosphate from (2E)-4-hydroxy-3-methylbutenyl diphosphate: step 1/1. Its pathway is isoprenoid biosynthesis; isopentenyl diphosphate biosynthesis via DXP pathway; isopentenyl diphosphate from 1-deoxy-D-xylulose 5-phosphate: step 6/6. Functionally, catalyzes the conversion of 1-hydroxy-2-methyl-2-(E)-butenyl 4-diphosphate (HMBPP) into a mixture of isopentenyl diphosphate (IPP) and dimethylallyl diphosphate (DMAPP). Acts in the terminal step of the DOXP/MEP pathway for isoprenoid precursor biosynthesis. The chain is 4-hydroxy-3-methylbut-2-enyl diphosphate reductase from Xylella fastidiosa (strain M23).